A 137-amino-acid polypeptide reads, in one-letter code: Peptide methionine sulfoxide reductase MsrB (137 aa).

The 123-residue stretch at 7 to 129 (AEELKKKLSE…NSASLAFSDE (123 aa)) folds into the MsrB domain. Zn(2+)-binding residues include Cys46, Cys49, Cys95, and Cys98. Cys118 acts as the Nucleophile in catalysis.

The protein belongs to the MsrB Met sulfoxide reductase family. Zn(2+) is required as a cofactor.

It catalyses the reaction L-methionyl-[protein] + [thioredoxin]-disulfide + H2O = L-methionyl-(R)-S-oxide-[protein] + [thioredoxin]-dithiol. The polypeptide is Peptide methionine sulfoxide reductase MsrB (Salmonella dublin (strain CT_02021853)).